Here is a 372-residue protein sequence, read N- to C-terminus: Queuine tRNA-ribosyltransferase (372 aa).

D92 (proton acceptor) is an active-site residue. Substrate-binding positions include 92-96 (DSGGF), D146, Q188, and G215. Residues 246 to 252 (GIGTLRE) are RNA binding. The Nucleophile role is filled by D265. Positions 270–274 (TRLGR) are RNA binding; important for wobble base 34 recognition. The Zn(2+) site is built by C303, C305, C308, and H334.

It belongs to the queuine tRNA-ribosyltransferase family. Homodimer. Within each dimer, one monomer is responsible for RNA recognition and catalysis, while the other monomer binds to the replacement base PreQ1. It depends on Zn(2+) as a cofactor.

The catalysed reaction is 7-aminomethyl-7-carbaguanine + guanosine(34) in tRNA = 7-aminomethyl-7-carbaguanosine(34) in tRNA + guanine. It participates in tRNA modification; tRNA-queuosine biosynthesis. Functionally, catalyzes the base-exchange of a guanine (G) residue with the queuine precursor 7-aminomethyl-7-deazaguanine (PreQ1) at position 34 (anticodon wobble position) in tRNAs with GU(N) anticodons (tRNA-Asp, -Asn, -His and -Tyr). Catalysis occurs through a double-displacement mechanism. The nucleophile active site attacks the C1' of nucleotide 34 to detach the guanine base from the RNA, forming a covalent enzyme-RNA intermediate. The proton acceptor active site deprotonates the incoming PreQ1, allowing a nucleophilic attack on the C1' of the ribose to form the product. After dissociation, two additional enzymatic reactions on the tRNA convert PreQ1 to queuine (Q), resulting in the hypermodified nucleoside queuosine (7-(((4,5-cis-dihydroxy-2-cyclopenten-1-yl)amino)methyl)-7-deazaguanosine). The protein is Queuine tRNA-ribosyltransferase of Synechococcus sp. (strain CC9311).